We begin with the raw amino-acid sequence, 115 residues long: Cysteine-rich venom protein 5 (115 aa).

Positions 1–22 (MSKVMIIMLVGMIFAIISTVSG) are cleaved as a signal peptide. 3 cysteine pairs are disulfide-bonded: Cys-26–Cys-41, Cys-33–Cys-44, and Cys-40–Cys-51. Residues 54–115 (RIGPPINTQP…RKPTNRPRSH (62 aa)) form a disordered region. Basic residues-rich tracts occupy residues 68 to 77 (QPTRRTRGPK) and 86 to 115 (NRTRRPKPTNRSRRPKPTHRRKPTNRPRSH).

In terms of tissue distribution, expressed by the venom gland.

Its subcellular location is the secreted. The protein is Cysteine-rich venom protein 5 of Pimpla hypochondriaca (Parasitoid wasp).